A 201-amino-acid polypeptide reads, in one-letter code: Large ribosomal subunit protein uL4 (201 aa).

Residues 45–66 (AQKSRAEVVGSNKKPWRQKGTG) are disordered.

This sequence belongs to the universal ribosomal protein uL4 family. In terms of assembly, part of the 50S ribosomal subunit.

One of the primary rRNA binding proteins, this protein initially binds near the 5'-end of the 23S rRNA. It is important during the early stages of 50S assembly. It makes multiple contacts with different domains of the 23S rRNA in the assembled 50S subunit and ribosome. Functionally, forms part of the polypeptide exit tunnel. The protein is Large ribosomal subunit protein uL4 of Baumannia cicadellinicola subsp. Homalodisca coagulata.